An 89-amino-acid polypeptide reads, in one-letter code: MALSVEEKAQIVAEYQQAAGDTGSPEVQVALLTANINKLQGHFKANEKDHHSRRGLIRMVNQRRKLLDYLKGKDTTRYSALIGRLGLRR.

It belongs to the universal ribosomal protein uS15 family. As to quaternary structure, part of the 30S ribosomal subunit. Forms a bridge to the 50S subunit in the 70S ribosome, contacting the 23S rRNA.

Functionally, one of the primary rRNA binding proteins, it binds directly to 16S rRNA where it helps nucleate assembly of the platform of the 30S subunit by binding and bridging several RNA helices of the 16S rRNA. Its function is as follows. Forms an intersubunit bridge (bridge B4) with the 23S rRNA of the 50S subunit in the ribosome. The chain is Small ribosomal subunit protein uS15 from Pseudomonas entomophila (strain L48).